The following is a 426-amino-acid chain: Glutamate-1-semialdehyde 2,1-aminomutase (426 aa).

Lys265 carries the post-translational modification N6-(pyridoxal phosphate)lysine.

This sequence belongs to the class-III pyridoxal-phosphate-dependent aminotransferase family. HemL subfamily. As to quaternary structure, homodimer. Requires pyridoxal 5'-phosphate as cofactor.

The protein localises to the cytoplasm. The enzyme catalyses (S)-4-amino-5-oxopentanoate = 5-aminolevulinate. It participates in porphyrin-containing compound metabolism; protoporphyrin-IX biosynthesis; 5-aminolevulinate from L-glutamyl-tRNA(Glu): step 2/2. This is Glutamate-1-semialdehyde 2,1-aminomutase from Escherichia coli O7:K1 (strain IAI39 / ExPEC).